A 158-amino-acid polypeptide reads, in one-letter code: Succinate dehydrogenase assembly factor 2, mitochondrial (158 aa).

The N-terminal 17 residues, Met1 to Ala17, are a transit peptide targeting the mitochondrion.

It belongs to the SDHAF2 family. In terms of assembly, interacts with sdha within the SDH catalytic dimer.

It localises to the mitochondrion matrix. In terms of biological role, plays an essential role in the assembly of succinate dehydrogenase (SDH), an enzyme complex (also referred to as respiratory complex II) that is a component of both the tricarboxylic acid (TCA) cycle and the mitochondrial electron transport chain, and which couples the oxidation of succinate to fumarate with the reduction of ubiquinone (coenzyme Q) to ubiquinol. Required for flavinylation (covalent attachment of FAD) of the flavoprotein subunit sdha of the SDH catalytic dimer. The protein is Succinate dehydrogenase assembly factor 2, mitochondrial of Danio rerio (Zebrafish).